The sequence spans 273 residues: Undecaprenyl-diphosphatase (273 aa).

7 consecutive transmembrane segments (helical) span residues A48 to F68, L89 to E109, L116 to A136, I152 to F172, A193 to L213, A222 to I242, and I252 to Y272.

This sequence belongs to the UppP family.

It is found in the cell membrane. It carries out the reaction di-trans,octa-cis-undecaprenyl diphosphate + H2O = di-trans,octa-cis-undecaprenyl phosphate + phosphate + H(+). In terms of biological role, catalyzes the dephosphorylation of undecaprenyl diphosphate (UPP). Confers resistance to bacitracin. The protein is Undecaprenyl-diphosphatase of Geobacillus thermodenitrificans (strain NG80-2).